A 69-amino-acid polypeptide reads, in one-letter code: Large ribosomal subunit protein bL28 (69 aa).

Belongs to the bacterial ribosomal protein bL28 family.

This Desulfovibrio desulfuricans (strain ATCC 27774 / DSM 6949 / MB) protein is Large ribosomal subunit protein bL28.